Reading from the N-terminus, the 324-residue chain is MIELLSAAGQAIGNGPWQTALNTLLNEKSRQLTDVDGNARRLTALMNQLPDLLPSHRNLASGRIEIGTPEDLTETQHQALYDTLMAFRPWRKGPFNIFGIPVDTEWRSDLKWARIAPHLAPLQGRRILDVGSSCGYYLMRMAEANPQLALGLEPYPPLFCQYVLLQRWLKLPQVHCLPLKLEELPPMDGYFDTIFHMGVLYHQRSPHEALKQLASLLRPGGELVLETLVLDGDQDLALCPRDRYAKMRNVFFLPTVPCLEAWLNKAGFEDIRCVDRSWTTIEEQHPTPWINTESLPDFLDPSDPTRTIEGYQAPLRAAVIARRR.

Carboxy-S-adenosyl-L-methionine is bound by residues K92, W106, K111, G131, 181-182, M197, Y201, and R316; that span reads LE.

This sequence belongs to the class I-like SAM-binding methyltransferase superfamily. CmoB family. Homotetramer.

The enzyme catalyses carboxy-S-adenosyl-L-methionine + 5-hydroxyuridine(34) in tRNA = 5-carboxymethoxyuridine(34) in tRNA + S-adenosyl-L-homocysteine + H(+). In terms of biological role, catalyzes carboxymethyl transfer from carboxy-S-adenosyl-L-methionine (Cx-SAM) to 5-hydroxyuridine (ho5U) to form 5-carboxymethoxyuridine (cmo5U) at position 34 in tRNAs. This chain is tRNA U34 carboxymethyltransferase, found in Syntrophotalea carbinolica (strain DSM 2380 / NBRC 103641 / GraBd1) (Pelobacter carbinolicus).